A 276-amino-acid chain; its full sequence is MTVRKNQAALTADEKRRFVAAVLELKRNGRYDEFVRTHNEFIMSDTRTGRRGGPGHRLPLPFLPWHRRFLLDFEQALQSVDSSVALPYWDWSTDRTVRASLWAPDFLGGTGRSSDGRVMDGPFAASTGNWPVNVRVDGRTFLRRSLGTGVRELPTRAEVDSVLSMATYDMAPYNSASDGFRNHLEGWRGVNLHNRVHVWVGGQMATGVSPNDPVFWLHHAYNRQLWAEWQRRHPGAGYVPTGGTPDVVDLNDTMKPWNDVRPADLLTHTAHYTFDV.

Cu cation contacts are provided by His38, His56, His66, His193, His197, and His219.

The protein belongs to the tyrosinase family. Requires Cu(2+) as cofactor.

It catalyses the reaction 2 L-dopa + O2 = 2 L-dopaquinone + 2 H2O. The catalysed reaction is L-tyrosine + O2 = L-dopaquinone + H2O. Functionally, this is a copper-containing oxidase that functions in the formation of pigments such as melanins and other polyphenolic compounds. The sequence is that of Tyrosinase (melC2) from Streptomyces galbus.